The chain runs to 107 residues: Putative antitoxin VapB5 (107 aa).

The next 2 helical transmembrane spans lie at 3–23 (GPVI…ILLA) and 65–85 (LIIL…AYLY).

The protein resides in the cell membrane. Possibly the antitoxin component of a type II toxin-antitoxin (TA) system. Its cognate toxin is VapC5 (Potential). The sequence is that of Putative antitoxin VapB5 (vapB5) from Methanocaldococcus jannaschii (strain ATCC 43067 / DSM 2661 / JAL-1 / JCM 10045 / NBRC 100440) (Methanococcus jannaschii).